A 297-amino-acid chain; its full sequence is 33 kDa chaperonin (297 aa).

Cystine bridges form between Cys-232–Cys-234 and Cys-266–Cys-269.

Belongs to the HSP33 family. Under oxidizing conditions two disulfide bonds are formed involving the reactive cysteines. Under reducing conditions zinc is bound to the reactive cysteines and the protein is inactive.

It is found in the cytoplasm. Redox regulated molecular chaperone. Protects both thermally unfolding and oxidatively damaged proteins from irreversible aggregation. Plays an important role in the bacterial defense system toward oxidative stress. This chain is 33 kDa chaperonin, found in Azotobacter vinelandii (strain DJ / ATCC BAA-1303).